The chain runs to 567 residues: Probable serine/threonine-protein kinase WNK6 (567 aa).

One can recognise a Protein kinase domain in the interval 28-285 (IRYKEVIGKG…AKELLLDPFL (258 aa)). ATP is bound by residues 108-111 (TELF) and lysine 158. Aspartate 175 functions as the Proton acceptor in the catalytic mechanism. The segment covering 499–509 (VDATKGEDKSS) has biased composition (basic and acidic residues). Residues 499-528 (VDATKGEDKSSIQEVEEATEPVSLEEEERL) form a disordered region. The span at 512–525 (EVEEATEPVSLEEE) shows a compositional bias: acidic residues. A coiled-coil region spans residues 519–553 (PVSLEEEERLRQELEEIEAKYQEDMKEIATKREEA).

This sequence belongs to the protein kinase superfamily. Ser/Thr protein kinase family. WNK subfamily.

It catalyses the reaction L-seryl-[protein] + ATP = O-phospho-L-seryl-[protein] + ADP + H(+). The enzyme catalyses L-threonyl-[protein] + ATP = O-phospho-L-threonyl-[protein] + ADP + H(+). In terms of biological role, may regulate flowering time by modulating the photoperiod pathway. This chain is Probable serine/threonine-protein kinase WNK6 (WNK6), found in Arabidopsis thaliana (Mouse-ear cress).